The following is a 1233-amino-acid chain: Rho guanine nucleotide exchange factor 10-like protein (1233 aa).

Over residues 1-10 (MASSNPPPQP) the composition is skewed to pro residues. A disordered region spans residues 1–93 (MASSNPPPQP…GTGVPAWVSN (93 aa)). The segment covering 26-46 (EAEDDPGEAFEFDDSDDEEDT) has biased composition (acidic residues). Ser40 carries the post-translational modification Phosphoserine. Residues 72 to 89 (PVTDPDPAAAPPGTGVPA) show a composition bias toward low complexity. Phosphotyrosine is present on residues Tyr131 and Tyr152. Residues 159-193 (GAPRQAEDLGWSSSEFESYSEDSGEEAKPEVEPAK) are disordered. Positions 183-193 (EEAKPEVEPAK) are enriched in basic and acidic residues. Ser240 is modified (phosphoserine). In terms of domain architecture, DH spans 275–462 (VRRHILGSIV…ETLAEKLNEQ (188 aa)). The segment covering 1089 to 1104 (QEEAEGPRAEEEKPDG) has biased composition (basic and acidic residues). 2 disordered regions span residues 1089–1117 (QEEA…HVGR) and 1140–1161 (PLLS…SEED).

In terms of assembly, interacts with RHOA, RHOB and RHOC.

It is found in the cytoplasm. Acts as a guanine nucleotide exchange factor (GEF) for RHOA, RHOB and RHOC. The sequence is that of Rho guanine nucleotide exchange factor 10-like protein (ARHGEF10L) from Pongo abelii (Sumatran orangutan).